An 859-amino-acid polypeptide reads, in one-letter code: Linoleate 9S-lipoxygenase B (859 aa).

Positions 34–158 (INIGASVVDG…RYKSDRIFFA (125 aa)) constitute a PLAT domain. The Lipoxygenase domain occupies 161–859 (AYLPSETPQP…GKGIPNSVSI (699 aa)). Residues 213-246 (EYARPILGGSSEYPYPRRGRTGREPTKADPNCES) form a disordered region. Residues 233–244 (TGREPTKADPNC) show a composition bias toward basic and acidic residues. Fe cation is bound by residues histidine 521, histidine 526, histidine 711, and isoleucine 859.

The protein belongs to the lipoxygenase family. Monomer. Fe cation serves as cofactor. As to expression, fruit specific.

The protein localises to the cytoplasm. The enzyme catalyses (9Z,12Z)-octadecadienoate + O2 = (9S)-hydroperoxy-(10E,12Z)-octadecadienoate. It participates in lipid metabolism; oxylipin biosynthesis. Plant lipoxygenase may be involved in a number of diverse aspects of plant physiology including growth and development, pest resistance, and senescence or responses to wounding. It catalyzes the hydroperoxidation of lipids containing a cis,cis-1,4-pentadiene structure. This Solanum lycopersicum (Tomato) protein is Linoleate 9S-lipoxygenase B (LOX1.2).